Consider the following 580-residue polypeptide: DBIRD complex subunit ZNF326 (580 aa).

The segment at 1–124 is mediates transcriptional activation; the sequence is MDFEDDYVHS…YRNSLDSFGG (124 aa). Ser-48, Ser-56, Ser-63, Ser-69, Ser-81, Ser-82, Ser-91, Ser-106, Ser-114, Ser-118, Ser-121, and Ser-137 each carry phosphoserine. A Glycyl lysine isopeptide (Lys-Gly) (interchain with G-Cter in SUMO2) cross-link involves residue Lys-140. The interval 156 to 196 is disordered; the sequence is SYSSFSSPHMKPAPVGSRGRGTPAYPESTFGSRSYDAFGGP. Arg-173 carries the post-translational modification Omega-N-methylarginine. Ser-212 carries the phosphoserine modification. Residue Arg-235 is modified to Omega-N-methylarginine. The Bipartite nuclear localization signal signature appears at 238 to 260; it reads KRKMMQIFIKPGGAFIKKPKLAK. Lys-240 is covalently cross-linked (Glycyl lysine isopeptide (Lys-Gly) (interchain with G-Cter in SUMO2)). Lys-247 is modified (N6-acetyllysine; alternate). A Glycyl lysine isopeptide (Lys-Gly) (interchain with G-Cter in SUMO2); alternate cross-link involves residue Lys-247. Residues Lys-254 and Lys-264 each participate in a glycyl lysine isopeptide (Lys-Gly) (interchain with G-Cter in SUMO2) cross-link. The tract at residues 256–302 is disordered; it reads PKLAKPMDKMNLSKSPTKTDPKNEEEEKRRIEARREKQRRRREKNSE. Ser-270 bears the Phosphoserine mark. Residues 272 to 290 are compositionally biased toward basic and acidic residues; it reads TKTDPKNEEEEKRRIEARR. A C2H2 AKAP95-type 1 zinc finger spans residues 314-336; that stretch reads CSFCKFRTFEEKDIELHLESSSH. Lys-401 is covalently cross-linked (Glycyl lysine isopeptide (Lys-Gly) (interchain with G-Cter in SUMO2)). The segment at 407-430 adopts a C2H2 AKAP95-type 2 zinc-finger fold; sequence CSACSVYIPALHSSVQLHLKSPDH. Glycyl lysine isopeptide (Lys-Gly) (interchain with G-Cter in SUMO2) cross-links involve residues Lys-459 and Lys-467. The tract at residues 470 to 580 is disordered; the sequence is NPFEIQDHPQ…ATEQCEHRQM (111 aa). The span at 483–529 shows a compositional bias: acidic residues; that stretch reads IEGDEEDEEKIDEPIEEEEEEEEEEEEEGEEAGSVEEEGDVEGEEGT. Over residues 530-539 the composition is skewed to low complexity; that stretch reads AEAAAAGEAD. Acidic residues predominate over residues 540–562; it reads AVGEAEGAGEAEEAEEEEEEEGT.

The protein belongs to the AKAP95 family. In terms of assembly, component of the DBIRD complex. Interacts with CCAR2; the interaction is direct. In terms of tissue distribution, ubiquitously expressed in adult tissues. Highly expressed in neuronal tissues such as brain and neural tube.

Its subcellular location is the nucleus matrix. Functionally, core component of the DBIRD complex, a multiprotein complex that acts at the interface between core mRNP particles and RNA polymerase II (RNAPII) and integrates transcript elongation with the regulation of alternative splicing: the DBIRD complex affects local transcript elongation rates and alternative splicing of a large set of exons embedded in (A + T)-rich DNA regions. May also play a role in neuronal differentiation. Able to bind DNA and activate expression in vitro. The sequence is that of DBIRD complex subunit ZNF326 (Znf326) from Mus musculus (Mouse).